The primary structure comprises 155 residues: Transcription antitermination protein NusB (155 aa).

Belongs to the NusB family.

Functionally, involved in transcription antitermination. Required for transcription of ribosomal RNA (rRNA) genes. Binds specifically to the boxA antiterminator sequence of the ribosomal RNA (rrn) operons. The chain is Transcription antitermination protein NusB from Azoarcus sp. (strain BH72).